Here is a 350-residue protein sequence, read N- to C-terminus: Biotin synthase (350 aa).

One can recognise a Radical SAM core domain in the interval 41 to 268 (NEVQISRLLS…KSRVRLSAGR (228 aa)). Cys56, Cys60, and Cys63 together coordinate [4Fe-4S] cluster. The [2Fe-2S] cluster site is built by Cys100, Cys131, Cys191, and Arg263.

It belongs to the radical SAM superfamily. Biotin synthase family. Homodimer. The cofactor is [4Fe-4S] cluster. Requires [2Fe-2S] cluster as cofactor.

The catalysed reaction is (4R,5S)-dethiobiotin + (sulfur carrier)-SH + 2 reduced [2Fe-2S]-[ferredoxin] + 2 S-adenosyl-L-methionine = (sulfur carrier)-H + biotin + 2 5'-deoxyadenosine + 2 L-methionine + 2 oxidized [2Fe-2S]-[ferredoxin]. Its pathway is cofactor biosynthesis; biotin biosynthesis; biotin from 7,8-diaminononanoate: step 2/2. Catalyzes the conversion of dethiobiotin (DTB) to biotin by the insertion of a sulfur atom into dethiobiotin via a radical-based mechanism. The chain is Biotin synthase from Shewanella halifaxensis (strain HAW-EB4).